The following is a 223-amino-acid chain: TIESCTCDYKFRGDSGNDWEWGGCSDNADFGHRFGKKFVDSGEKGRDLRHAMNLHNNEAGRKTVSSEMRRECKCHGMSGSCTIETCWMRLPTFRTVGELIKERFDGASRVTMRNDGSPSDRETESSFVPYNPSHKQPASRDLVYFENSPDFCERNDKFGTPGTRGRECNATSLGVDGCDLMCCSRGSTTTEIKVKERCSCTFHWCCKVKCEECTSFRTVHRCL.

3 cysteine pairs are disulfide-bonded: Cys-7–Cys-24, Cys-72–Cys-86, and Cys-74–Cys-81. Ser-78 is lipidated: O-palmitoleoyl serine; by PORCN. Residues 110–135 (VTMRNDGSPSDRETESSFVPYNPSHK) form a disordered region. The span at 125–135 (SSFVPYNPSHK) shows a compositional bias: polar residues. Cystine bridges form between Cys-152–Cys-183, Cys-168–Cys-178, Cys-182–Cys-222, Cys-198–Cys-213, Cys-200–Cys-210, and Cys-205–Cys-206. N-linked (GlcNAc...) asparagine glycosylation occurs at Asn-169.

This sequence belongs to the Wnt family. Palmitoleoylation is required for efficient binding to frizzled receptors. Palmitoleoylation is necessary for proper trafficking to cell surface. Depalmitoleoylated by NOTUM, leading to inhibit Wnt signaling pathway.

The protein resides in the secreted. The protein localises to the extracellular space. Its subcellular location is the extracellular matrix. In terms of biological role, ligand for members of the frizzled family of seven transmembrane receptors. Probable developmental protein. The chain is Protein Wnt-1 (WNT-1) from Strongylocentrotus purpuratus (Purple sea urchin).